The primary structure comprises 132 residues: UPF0292 protein PYRAB04740 (132 aa).

In terms of domain architecture, Toprim spans 20–100 (DGAIIVEGPR…KVDTETRRSL (81 aa)). Glu26, Asp69, and Asp71 together coordinate Mg(2+).

Belongs to the UPF0292 family. The cofactor is Mg(2+).

This is UPF0292 protein PYRAB04740 from Pyrococcus abyssi (strain GE5 / Orsay).